A 290-amino-acid chain; its full sequence is MSSEVETAEAVDESEKNSMASEKENHSKIADFSDLLKEGTKEADDRAENTQFVKDFLKGNIKKELFKLATTALSYSAPEEEMDSLTKDMEYFFGENWEEKVKCSEAAQTYVDQIHYVGQNEPEHLVAHTYSTYMGGNLSGDQVLKKETQPVPFTREGTQFYLFEHVDNAKQFKLFYCARLNALDLNLKTKERIVEEATKAFEYNMQIFSELDQAGSIPVRETLKNGLSILDGKGGVCKCPFNAAQPDKGTLGGSNCPFQMSMALLRKPNLQLILVASMALVAGLLAWYYM.

The span at 1–12 (MSSEVETAEAVD) shows a compositional bias: acidic residues. Residues 1–33 (MSSEVETAEAVDESEKNSMASEKENHSKIADFS) are disordered. Residues 13–33 (ESEKNSMASEKENHSKIADFS) show a composition bias toward basic and acidic residues. 2 HRM repeats span residues 238-243 (KCPFNA) and 255-260 (NCPFQM).

It belongs to the heme oxygenase family. In terms of tissue distribution, found in the spleen, liver, thymus, prostate, heart, kidney, brain and testis.

The catalysed reaction is heme b + 3 reduced [NADPH--hemoprotein reductase] + 3 O2 = biliverdin IXalpha + CO + Fe(2+) + 3 oxidized [NADPH--hemoprotein reductase] + 3 H2O + H(+). Heme oxygenase cleaves the heme ring at the alpha methene bridge to form biliverdin. Biliverdin is subsequently converted to bilirubin by biliverdin reductase. Heme oxygenase 3 could be implicated in some heme-dependent regulatory role in the cell. This is Putative heme oxygenase 3 (Hmox3) from Rattus norvegicus (Rat).